The chain runs to 409 residues: Gamma-glutamyl phosphate reductase (409 aa).

Belongs to the gamma-glutamyl phosphate reductase family.

The protein localises to the cytoplasm. The enzyme catalyses L-glutamate 5-semialdehyde + phosphate + NADP(+) = L-glutamyl 5-phosphate + NADPH + H(+). It functions in the pathway amino-acid biosynthesis; L-proline biosynthesis; L-glutamate 5-semialdehyde from L-glutamate: step 2/2. Functionally, catalyzes the NADPH-dependent reduction of L-glutamate 5-phosphate into L-glutamate 5-semialdehyde and phosphate. The product spontaneously undergoes cyclization to form 1-pyrroline-5-carboxylate. This is Gamma-glutamyl phosphate reductase from Bartonella tribocorum (strain CIP 105476 / IBS 506).